A 268-amino-acid polypeptide reads, in one-letter code: Ubiquinone biosynthesis protein COQ4 homolog 1, mitochondrial (268 aa).

Basic residues predominate over residues 1-10 (MFLRRVHPVR). The N-terminal 18 residues, 1-18 (MFLRRVHPVRLGHASQRS), are a transit peptide targeting the mitochondrion. A disordered region spans residues 1 to 44 (MFLRRVHPVRLGHASQRSLTTTKSRNESTTTTVEAPQAAPSPPP). Residues 20-38 (TTTKSRNESTTTTVEAPQA) are compositionally biased toward low complexity. Zn(2+) contacts are provided by histidine 177, aspartate 178, histidine 181, and glutamate 193.

It belongs to the COQ4 family. Component of a multi-subunit COQ enzyme complex. Requires Zn(2+) as cofactor.

It is found in the mitochondrion inner membrane. The enzyme catalyses a 4-hydroxy-3-methoxy-5-(all-trans-polyprenyl)benzoate + H(+) = a 2-methoxy-6-(all-trans-polyprenyl)phenol + CO2. It functions in the pathway cofactor biosynthesis; ubiquinone biosynthesis. Functionally, lyase that catalyzes the C1-decarboxylation of 4-hydroxy-3-methoxy-5-(all-trans-polyprenyl)benzoic acid into 2-methoxy-6-(all-trans-polyprenyl)phenol during ubiquinone biosynthesis. In Culex quinquefasciatus (Southern house mosquito), this protein is Ubiquinone biosynthesis protein COQ4 homolog 1, mitochondrial.